A 180-amino-acid polypeptide reads, in one-letter code: ADP-ribosylation factor-like protein 1 (180 aa).

A lipid anchor (N-myristoyl glycine) is attached at Gly2. Residues 23–30 (GLDGAGKT), 66–70 (DLGGQ), and 125–128 (NKQD) each bind GTP.

It belongs to the small GTPase superfamily. Arf family. Expressed in neuronal cells. Expression in hypodermal tissues is absent.

The protein resides in the golgi apparatus. Its subcellular location is the cytoplasm. It localises to the cytoplasmic granule. Its function is as follows. GTP-binding protein that may be involved in protein trafficking; may modulate vesicle budding and uncoating within the Golgi apparatus. Plays a role in male tail tip morphogenesis. This chain is ADP-ribosylation factor-like protein 1, found in Caenorhabditis elegans.